Consider the following 454-residue polypeptide: CCA-adding enzyme (454 aa).

ATP-binding residues include serine 51 and lysine 54. CTP contacts are provided by serine 51 and lysine 54. Mg(2+) is bound by residues aspartate 63, aspartate 65, and aspartate 118. Histidine 141, lysine 161, and tyrosine 170 together coordinate ATP. Residues histidine 141, lysine 161, and tyrosine 170 each contribute to the CTP site.

It belongs to the tRNA nucleotidyltransferase/poly(A) polymerase family. Archaeal CCA-adding enzyme subfamily. Homodimer. The cofactor is Mg(2+).

The enzyme catalyses a tRNA precursor + 2 CTP + ATP = a tRNA with a 3' CCA end + 3 diphosphate. It catalyses the reaction a tRNA with a 3' CCA end + 2 CTP + ATP = a tRNA with a 3' CCACCA end + 3 diphosphate. Catalyzes the addition and repair of the essential 3'-terminal CCA sequence in tRNAs without using a nucleic acid template. Adds these three nucleotides in the order of C, C, and A to the tRNA nucleotide-73, using CTP and ATP as substrates and producing inorganic pyrophosphate. tRNA 3'-terminal CCA addition is required both for tRNA processing and repair. Also involved in tRNA surveillance by mediating tandem CCA addition to generate a CCACCA at the 3' terminus of unstable tRNAs. While stable tRNAs receive only 3'-terminal CCA, unstable tRNAs are marked with CCACCA and rapidly degraded. In Methanothermobacter thermautotrophicus (strain ATCC 29096 / DSM 1053 / JCM 10044 / NBRC 100330 / Delta H) (Methanobacterium thermoautotrophicum), this protein is CCA-adding enzyme.